The primary structure comprises 1025 residues: Multidrug resistance protein MdtC (1025 aa).

A run of 12 helical transmembrane segments spans residues 3-23, 333-353, 360-380, 387-407, 431-451, 463-483, 528-548, 853-873, 875-895, 897-917, 953-973, and 984-1004; these read FFAL…AITL, EVEQ…FLFL, IIPA…MYLC, LSLM…IVVL, VGFT…PLLL, FAVT…TLTP, LVGV…ISIP, VILI…LYES, VHPL…LLAL, LFNA…IGIV, PIMM…LSGG, and ITIV…TPVV.

The protein belongs to the resistance-nodulation-cell division (RND) (TC 2.A.6) family. MdtC subfamily. In terms of assembly, part of a tripartite efflux system composed of MdtA, MdtB and MdtC. MdtC forms a heteromultimer with MdtB.

The protein localises to the cell inner membrane. In terms of biological role, the MdtABC tripartite complex confers resistance against novobiocin and deoxycholate. The protein is Multidrug resistance protein MdtC of Escherichia coli O139:H28 (strain E24377A / ETEC).